Here is a 163-residue protein sequence, read N- to C-terminus: Deoxyuridine 5'-triphosphate nucleotidohydrolase (163 aa).

It belongs to the dUTPase family. Mg(2+) is required as a cofactor.

The enzyme catalyses dUTP + H2O = dUMP + diphosphate + H(+). The protein operates within pyrimidine metabolism; dUMP biosynthesis; dUMP from dCTP (dUTP route): step 2/2. Its function is as follows. This enzyme is involved in nucleotide metabolism: it produces dUMP, the immediate precursor of thymidine nucleotides and it decreases the intracellular concentration of dUTP so that uracil cannot be incorporated into DNA. The sequence is that of Deoxyuridine 5'-triphosphate nucleotidohydrolase from Galliformes (FAdV-8).